The sequence spans 153 residues: UPF0756 membrane protein LSEI_1366 (153 aa).

Helical transmembrane passes span 4–24 (WLFLLGILAIAIVGKNKSLII), 52–72 (WGVTVISAAIMVPIATGEIGF), 85–105 (WIAIGCGVLVAVLSAKGVGLL), and 115–135 (LVFGTIIGVVFLKGIAAGPVI).

The protein belongs to the UPF0756 family.

Its subcellular location is the cell membrane. The protein is UPF0756 membrane protein LSEI_1366 of Lacticaseibacillus paracasei (strain ATCC 334 / BCRC 17002 / CCUG 31169 / CIP 107868 / KCTC 3260 / NRRL B-441) (Lactobacillus paracasei).